The following is a 173-amino-acid chain: Small ribosomal subunit protein uS5 (173 aa).

The S5 DRBM domain occupies 17–80 (WQERVIQIRR…SDAKKHVVDV (64 aa)).

Belongs to the universal ribosomal protein uS5 family. As to quaternary structure, part of the 30S ribosomal subunit. Contacts proteins S4 and S8.

With S4 and S12 plays an important role in translational accuracy. Functionally, located at the back of the 30S subunit body where it stabilizes the conformation of the head with respect to the body. In Picosynechococcus sp. (strain ATCC 27264 / PCC 7002 / PR-6) (Agmenellum quadruplicatum), this protein is Small ribosomal subunit protein uS5.